Consider the following 1295-residue polypeptide: Phosphoribosylformylglycinamidine synthase (1295 aa).

Positions 302-327 are disordered; sequence SPWPGASTGSGGEIRDEGATGRGAKP. ATP is bound by residues 306–317 and Ala-677; that span reads GASTGSGGEIRD. Mg(2+) contacts are provided by Asp-678, Glu-717, Asn-721, and Asp-884. Ser-886 lines the ATP pocket. Residues 1042–1295 form the Glutamine amidotransferase type-1 domain; the sequence is VAVLREQGVN…IFRNARKQLG (254 aa). Cys-1135 functions as the Nucleophile in the catalytic mechanism. Residues His-1260 and Glu-1262 contribute to the active site.

In the N-terminal section; belongs to the FGAMS family. Monomer.

The protein resides in the cytoplasm. It catalyses the reaction N(2)-formyl-N(1)-(5-phospho-beta-D-ribosyl)glycinamide + L-glutamine + ATP + H2O = 2-formamido-N(1)-(5-O-phospho-beta-D-ribosyl)acetamidine + L-glutamate + ADP + phosphate + H(+). It functions in the pathway purine metabolism; IMP biosynthesis via de novo pathway; 5-amino-1-(5-phospho-D-ribosyl)imidazole from N(2)-formyl-N(1)-(5-phospho-D-ribosyl)glycinamide: step 1/2. Phosphoribosylformylglycinamidine synthase involved in the purines biosynthetic pathway. Catalyzes the ATP-dependent conversion of formylglycinamide ribonucleotide (FGAR) and glutamine to yield formylglycinamidine ribonucleotide (FGAM) and glutamate. This is Phosphoribosylformylglycinamidine synthase from Photorhabdus laumondii subsp. laumondii (strain DSM 15139 / CIP 105565 / TT01) (Photorhabdus luminescens subsp. laumondii).